The chain runs to 743 residues: Threonine synthase-like 1 (743 aa).

Position 281 is an N6-acetyllysine (Lys281). N6-(pyridoxal phosphate)lysine is present on Lys351.

It belongs to the threonine synthase family. The cofactor is pyridoxal 5'-phosphate.

This Homo sapiens (Human) protein is Threonine synthase-like 1 (THNSL1).